Reading from the N-terminus, the 341-residue chain is tRNA N6-adenosine threonylcarbamoyltransferase (341 aa).

Residues histidine 115 and histidine 119 each coordinate Fe cation. Substrate is bound by residues 137-141 (IVSGG), aspartate 170, glycine 183, aspartate 187, and asparagine 276. Residue aspartate 304 participates in Fe cation binding.

Belongs to the KAE1 / TsaD family. The cofactor is Fe(2+).

The protein localises to the cytoplasm. It carries out the reaction L-threonylcarbamoyladenylate + adenosine(37) in tRNA = N(6)-L-threonylcarbamoyladenosine(37) in tRNA + AMP + H(+). Required for the formation of a threonylcarbamoyl group on adenosine at position 37 (t(6)A37) in tRNAs that read codons beginning with adenine. Is involved in the transfer of the threonylcarbamoyl moiety of threonylcarbamoyl-AMP (TC-AMP) to the N6 group of A37, together with TsaE and TsaB. TsaD likely plays a direct catalytic role in this reaction. The protein is tRNA N6-adenosine threonylcarbamoyltransferase of Staphylococcus aureus (strain MSSA476).